A 400-amino-acid polypeptide reads, in one-letter code: Delta(12) fatty acid desaturase (400 aa).

The chain crosses the membrane as a helical span at residues 91 to 111 (LAWPAYWIMQGIVCTGIWVLA). The Histidine box-1 motif lies at 112-116 (HECGH). Positions 148–152 (HSKHH) match the Histidine box-2 motif. 3 consecutive transmembrane segments (helical) span residues 199–219 (IVTL…YLIM), 245–265 (FFDI…LIYA), and 277–297 (YYIV…FLQH). The short motif at 339 to 343 (HVAHH) is the Histidine box-3 element.

The protein belongs to the fatty acid desaturase type 1 family.

Its subcellular location is the membrane. The enzyme catalyses (9Z)-octadecenoyl-CoA + 2 Fe(II)-[cytochrome b5] + O2 + 2 H(+) = (9Z,12Z)-octadecadienoyl-CoA + 2 Fe(III)-[cytochrome b5] + 2 H2O. It catalyses the reaction (9Z)-hexadecenoyl-CoA + 2 Fe(II)-[cytochrome b5] + O2 + 2 H(+) = (9Z,12Z)-hexadecadienoyl-CoA + 2 Fe(III)-[cytochrome b5] + 2 H2O. It participates in lipid metabolism; polyunsaturated fatty acid biosynthesis. In terms of biological role, catalyzes the desaturation of oleic acid (Delta(9)-18:1) to linoleic acid (Delta(9), Delta(12)-18:2). The polypeptide is Delta(12) fatty acid desaturase (Mortierella alpina (Oleaginous fungus)).